We begin with the raw amino-acid sequence, 383 residues long: La protein homolog (383 aa).

A disordered region spans residues 1 to 43 (MTEVEAKATATEETTKEEEEAPETTAEQTEESAQETSENVSKL). Over residues 15–33 (TKEEEEAPETTAEQTEESA) the composition is skewed to acidic residues. An HTH La-type RNA-binding domain is found at 37–129 (SENVSKLEAS…RRHPERPLPE (93 aa)). An RRM domain is found at 141–228 (RTVYVKGFAP…RKMQDDYFEE (88 aa)). The 120-residue stretch at 249 to 368 (HLPKGASVHL…RTPEGRQASR (120 aa)) folds into the xRRM domain. The disordered stretch occupies residues 343–383 (KDQQARRQASNARNKGRTPEGRQASRPPQEWRRKAKGGRGE).

Its subcellular location is the nucleus. It localises to the cytoplasm. May be involved in transcription termination by RNA polymerase III. Binds RNA and DNA. Binds to the 3' end of the minus strand of Sindbis virus RNA. This may be significant for Sindbis virus RNA replication. This chain is La protein homolog, found in Aedes albopictus (Asian tiger mosquito).